A 678-amino-acid polypeptide reads, in one-letter code: Pescadillo homolog (678 aa).

A disordered region spans residues 265-289 (PQQQTKTNNTTKKSKSTTAAAAATT). Over residues 269–289 (TKTNNTTKKSKSTTAAAAATT) the composition is skewed to low complexity. The 91-residue stretch at 352 to 442 (DVTTLFKGFH…LLLPYSEYTI (91 aa)) folds into the BRCT domain. Disordered regions lie at residues 485–601 (TNAE…EDTK) and 626–678 (ATAN…KQKK). Over residues 505 to 518 (SDGESDDEDDEDLE) the composition is skewed to acidic residues. Positions 519-531 (HLETRYTEELRKE) are enriched in basic and acidic residues. Residues 541–574 (VDDDDEEEEDGEEDGEEEEEEEDGEEESESESES) are compositionally biased toward acidic residues. Residues 581–640 (VLTKKQRDELNKQKQAEEDTKLAELMIRKKDKWIYNKVKETNQQRATANQTLLEKRNKVE) are a coiled coil. 2 stretches are compositionally biased toward basic and acidic residues: residues 585–601 (KQRD…EDTK) and 633–643 (LEKRNKVESGK). Low complexity predominate over residues 649–678 (VKVAPQPKKPAPLVKKSQQKQQQASKKQKK).

It belongs to the pescadillo family.

It is found in the nucleus. Its subcellular location is the nucleolus. The protein resides in the nucleoplasm. In terms of biological role, required for maturation of ribosomal RNAs and formation of the large ribosomal subunit. The sequence is that of Pescadillo homolog from Dictyostelium discoideum (Social amoeba).